A 94-amino-acid chain; its full sequence is Cyclin-dependent kinases regulatory subunit (94 aa).

The protein belongs to the CKS family. In terms of assembly, forms a homohexamer that can probably bind six kinase subunits. Interacts with cdk-1.

It localises to the nucleus. Functionally, binds to the catalytic subunit of the cyclin dependent kinases and is essential for their biological function. Has a role in the exit from M phase during early mitotic cell division. More specifically, thought to act by degrading B-type cyclins that causes breakdown of nuclear envelope and exit mitosis. This chain is Cyclin-dependent kinases regulatory subunit (cks-1), found in Caenorhabditis elegans.